Consider the following 354-residue polypeptide: Dihydroorotate dehydrogenase (quinone) (354 aa).

FMN is bound by residues 67–71 (AGFDK) and Thr91. A substrate-binding site is contributed by Lys71. 116 to 120 (NRMGF) is a binding site for substrate. Asn144 and Asn177 together coordinate FMN. Asn177 contacts substrate. Ser180 (nucleophile) is an active-site residue. Position 182 (Asn182) interacts with substrate. 2 residues coordinate FMN: Lys213 and Thr241. 242–243 (NT) serves as a coordination point for substrate. Residues Gly265, Gly294, and 315–316 (YT) each bind FMN.

Belongs to the dihydroorotate dehydrogenase family. Type 2 subfamily. In terms of assembly, monomer. The cofactor is FMN.

The protein localises to the cell membrane. It carries out the reaction (S)-dihydroorotate + a quinone = orotate + a quinol. Its pathway is pyrimidine metabolism; UMP biosynthesis via de novo pathway; orotate from (S)-dihydroorotate (quinone route): step 1/1. Catalyzes the conversion of dihydroorotate to orotate with quinone as electron acceptor. In Mycolicibacterium smegmatis (strain ATCC 700084 / mc(2)155) (Mycobacterium smegmatis), this protein is Dihydroorotate dehydrogenase (quinone).